We begin with the raw amino-acid sequence, 1165 residues long: Immunoglobulin superfamily member 3 (1165 aa).

A signal peptide spans 1 to 20 (MGTAAGLLLAALLLAGTSWA). Residues 21–1095 (QREVNIQQGP…LQSTICANDA (1075 aa)) are Extracellular-facing. 8 Ig-like C2-type domains span residues 22 to 139 (REVN…AKMN), 144 to 262 (PDTL…WFPL), 276 to 386 (PTDK…RGPS), 406 to 527 (PLRT…WQLL), 545 to 661 (FAVT…WTQL), 678 to 800 (PRLQ…EEAS), 810 to 934 (PDAN…WYKR), and 951 to 1067 (PALQ…WYLL). Intrachain disulfides connect C43–C121 and C168–C246. The EWI motif signature appears at 250–252 (EWI). 6 disulfide bridges follow: C302–C376, C432–C511, C566–C645, C701–C779, C835–C918, and C974–C1051. Residues 1096–1116 (LFYLVFFYPFPIFGILIITIL) form a helical membrane-spanning segment. Over 1117-1165 (LVRFRHRPTSKPGEGKNGVPLLWIKEPHLNYSPTCLEPPVLSIHPGTID) the chain is Cytoplasmic.

The protein resides in the membrane. This is Immunoglobulin superfamily member 3 (igsf3) from Xenopus laevis (African clawed frog).